Reading from the N-terminus, the 570-residue chain is Auxin efflux carrier component 6 (570 aa).

Topologically, residues 1-6 (MITGNE) are extracellular. A helical membrane pass occupies residues 7–27 (FYTVMCAMAPLYFAMFVAYGS). The Cytoplasmic segment spans residues 28–38 (VKWCKIFTPAQ). Residues 39–59 (CSGINRFVSVFAVPVLSFHFI) traverse the membrane as a helical segment. Valine 51 provides a ligand contact to (indol-3-yl)acetate. The Extracellular segment spans residues 60–70 (SQNNPYKMDTM). Residues 71 to 91 (FILADTLSKIFVFVLLSLWAV) form a helical membrane-spanning segment. At 92–100 (FFKAGGLDW) the chain is on the cytoplasmic side. Residues 101–121 (LITLFSIATLPNTLVMGIPLL) traverse the membrane as a helical segment. Residues asparagine 112 and leucine 114 each contribute to the (indol-3-yl)acetate site. Over 122–131 (QAMYGDYTQT) the chain is Extracellular. Residues 132–152 (LMVQLVVLQCIIWYTLLLFLF) traverse the membrane as a helical segment. Tyrosine 145 contacts (indol-3-yl)acetate. Over 153-430 (ELRAARLLIR…LSRNPNTYSS (278 aa)) the chain is Cytoplasmic. Residues serine 230 and serine 308 each carry the phosphoserine modification. Residues 431–451 (LLGLVWSLISFKWNIPMPNIV) form a helical membrane-spanning segment. Topologically, residues 452–454 (DFS) are extracellular. Residues 455 to 475 (IKIISDAGLGMAMFSLGLFMA) traverse the membrane as a helical segment. At 476–491 (LQPKMIPCGAKKATMG) the chain is on the cytoplasmic side. The chain crosses the membrane as a helical span at residues 492–512 (MLIRFISGPLFMAGASLLVGL). Topologically, residues 513 to 515 (RGS) are extracellular. A helical transmembrane segment spans residues 516–536 (RLHAAIVQAALPQGIVPFVFA). (indol-3-yl)acetate-binding residues include isoleucine 530 and valine 531. Residues 537-549 (REYNLHPDLLSTL) are Cytoplasmic-facing. Residues 550 to 570 (VIFGMIVSLPVTILYYVLLGL) form a helical membrane-spanning segment.

The protein belongs to the auxin efflux carrier (TC 2.A.69.1) family. As to quaternary structure, homodimer. Expressed in the vasculature of the primary root, cotyledons, floral stem, sepals and the main transmitting tract of the reproductive silique. Expressed in embryos, shoot meristem, root tip and lateral root meristems. Expressed in the nectaries and the floral organ boundaries of the anthers. Detected in pollen. Expressed in broad subepidermal domains that narrowed to sites of vein formation. Expressed in veins of mature leaves.

The protein localises to the endoplasmic reticulum membrane. Component of the intracellular auxin-transport pathway. Regulates auxin transport and auxin homeostasis. Directly involved in the regulation of nectar production. Involved in unfolded protein response (UPR) activation. Involved in the control of vein patterning. Redundantly with PIN8, inhibits the vein-formation-promoting functions of PIN5. PIN5, PIN6, and PIN8 control vein network geometry, but they are expressed in mutually exclusive domains of leaf vascular cells. This chain is Auxin efflux carrier component 6, found in Arabidopsis thaliana (Mouse-ear cress).